A 1425-amino-acid polypeptide reads, in one-letter code: Ferlin 1 (1425 aa).

C2 domains follow at residues 1 to 123 (MAAK…RQWV), 161 to 281 (VNEG…PRWF), and 506 to 629 (TKAG…PVWL). Positions 871–952 (RPQASRLSRE…ALAASPEEET (82 aa)) are disordered. Composition is skewed to basic and acidic residues over residues 877 to 889 (LSRE…ERGK) and 912 to 926 (ETEK…KKEG). C2 domains are found at residues 1032 to 1160 (EMDA…EQMV) and 1192 to 1319 (RADY…QQHY). The chain crosses the membrane as a helical span at residues 1404–1424 (TGVWMTVAGIIALVIFVMFLL).

It belongs to the ferlin family.

It localises to the golgi apparatus. The protein resides in the trans-Golgi network membrane. Its subcellular location is the endosome membrane. The protein localises to the cytoplasm. Functionally, plays a role in microneme replenishment, probably at the vesicular trafficking level. Directs microneme organelle traffic differentially based on microneme population. Regulates microneme secretion: facilitates microneme membrane fusion with the plasma membrane. The protein is Ferlin 1 of Toxoplasma gondii.